The chain runs to 209 residues: NADH-ubiquinone oxidoreductase subunit 9 (209 aa).

Belongs to the complex I 30 kDa subunit family. Complex I is composed of about 30 different subunits.

It localises to the mitochondrion inner membrane. It catalyses the reaction a ubiquinone + NADH + 5 H(+)(in) = a ubiquinol + NAD(+) + 4 H(+)(out). Core subunit of the mitochondrial membrane respiratory chain NADH dehydrogenase (Complex I) that is believed to belong to the minimal assembly required for catalysis. Complex I functions in the transfer of electrons from NADH to the respiratory chain. The immediate electron acceptor for the enzyme is believed to be ubiquinone. This chain is NADH-ubiquinone oxidoreductase subunit 9 (nad9), found in Dictyostelium citrinum (Slime mold).